Here is a 269-residue protein sequence, read N- to C-terminus: Formamidopyrimidine-DNA glycosylase (269 aa).

Residue P2 is the Schiff-base intermediate with DNA of the active site. The active-site Proton donor is the E3. K57 functions as the Proton donor; for beta-elimination activity in the catalytic mechanism. DNA is bound by residues H90, R109, and K150. The FPG-type zinc-finger motif lies at 235-269 (QVYGRKGEPCRICGMPVVGTKHAQRATFYCRQCQK). Residue R259 is the Proton donor; for delta-elimination activity of the active site.

Belongs to the FPG family. Monomer. Zn(2+) serves as cofactor.

The enzyme catalyses Hydrolysis of DNA containing ring-opened 7-methylguanine residues, releasing 2,6-diamino-4-hydroxy-5-(N-methyl)formamidopyrimidine.. The catalysed reaction is 2'-deoxyribonucleotide-(2'-deoxyribose 5'-phosphate)-2'-deoxyribonucleotide-DNA = a 3'-end 2'-deoxyribonucleotide-(2,3-dehydro-2,3-deoxyribose 5'-phosphate)-DNA + a 5'-end 5'-phospho-2'-deoxyribonucleoside-DNA + H(+). Its function is as follows. Involved in base excision repair of DNA damaged by oxidation or by mutagenic agents. Acts as a DNA glycosylase that recognizes and removes damaged bases. Has a preference for oxidized purines, such as 7,8-dihydro-8-oxoguanine (8-oxoG). Has AP (apurinic/apyrimidinic) lyase activity and introduces nicks in the DNA strand. Cleaves the DNA backbone by beta-delta elimination to generate a single-strand break at the site of the removed base with both 3'- and 5'-phosphates. The chain is Formamidopyrimidine-DNA glycosylase from Klebsiella pneumoniae subsp. pneumoniae (strain ATCC 700721 / MGH 78578).